The following is a 433-amino-acid chain: Enolase (433 aa).

Ser-1 bears the N-acetylserine mark. Positions 36 and 157 each coordinate (2R)-2-phosphoglycerate. Glu-209 (proton donor) is an active-site residue. 3 residues coordinate Mn(2+): Asp-244, Glu-294, and Asp-319. Residues Lys-344, Arg-373, and Ser-374 each contribute to the (2R)-2-phosphoglycerate site. The active-site Proton acceptor is the Lys-344.

Belongs to the enolase family. In terms of assembly, homodimer. It depends on Mg(2+) as a cofactor.

It localises to the cytoplasm. The catalysed reaction is (2R)-2-phosphoglycerate = phosphoenolpyruvate + H2O. It participates in carbohydrate degradation; glycolysis; pyruvate from D-glyceraldehyde 3-phosphate: step 4/5. Inhibited by 2-phosphoglycolic acid. This Homarus gammarus (European lobster) protein is Enolase.